We begin with the raw amino-acid sequence, 307 residues long: MAIIGPTGTGKSQLALDVAERLGPLGAEIVNADAMQLYRGMDIGTAKLPVDARRGIPHHQLDVLDVTQTATVARYQRAAAADIEAILAAGAVPIIVGGSMLYIQSLLDDWSFPATDPRVRARWERRLAEVGVGELHAELARRDPAAAAAILPTDARRTVRALEVIELTGRPFAASAPRIGAPRWDTVIIGLDCDTTVLDERLARRTDAMFEQGLVAEVTGLLGRGLRDGVTAARALGYAQVIAALDAGGGDEQLRQAREQTYAGTRRYVRRQRSWFRRDHRVRWLDAGACSPPRLVDAALGAWRHVS.

Gly-5 to Ser-12 contacts ATP. Position 7–12 (Thr-7–Ser-12) interacts with substrate.

The protein belongs to the IPP transferase family. Monomer. The cofactor is Mg(2+).

The catalysed reaction is adenosine(37) in tRNA + dimethylallyl diphosphate = N(6)-dimethylallyladenosine(37) in tRNA + diphosphate. In terms of biological role, catalyzes the transfer of a dimethylallyl group onto the adenine at position 37 in tRNAs that read codons beginning with uridine, leading to the formation of N6-(dimethylallyl)adenosine (i(6)A). The chain is tRNA dimethylallyltransferase from Mycobacterium avium (strain 104).